The following is a 602-amino-acid chain: UvrABC system protein C (602 aa).

The 78-residue stretch at 15 to 92 folds into the GIY-YIG domain; it reads DLPGSYQMKD…IQKYQPYYNI (78 aa). A UVR domain is found at 197–232; the sequence is GKAKASLTAKMERAAKNLQFERAAEIRDQLHYIEQT.

The protein belongs to the UvrC family. Interacts with UvrB in an incision complex.

It localises to the cytoplasm. Functionally, the UvrABC repair system catalyzes the recognition and processing of DNA lesions. UvrC both incises the 5' and 3' sides of the lesion. The N-terminal half is responsible for the 3' incision and the C-terminal half is responsible for the 5' incision. The sequence is that of UvrABC system protein C from Lacticaseibacillus paracasei (strain ATCC 334 / BCRC 17002 / CCUG 31169 / CIP 107868 / KCTC 3260 / NRRL B-441) (Lactobacillus paracasei).